The sequence spans 1029 residues: Eukaryotic translation initiation factor 3 subunit A (1029 aa).

Positions 92-121 (LKKFIELAEQKVTEAQAKADEIQSSLESAA) form a coiled coil. Residues 339–523 (MTKAASFVLL…GVLTFESDIF (185 aa)) form the PCI domain. Residues 606-903 (TRRAIIEKRK…EEEAEQRRAA (298 aa)) adopt a coiled-coil conformation. Composition is skewed to basic and acidic residues over residues 621 to 632 (ALQKKQREEENR), 644 to 666 (EQQRLLDEHRERERKRMKDEQDR), 797 to 901 (TEKR…EQRR), and 913 to 924 (GPAREASPERTA). Disordered regions lie at residues 621–666 (ALQK…EQDR) and 797–1029 (TEKR…KQQQ). Low complexity predominate over residues 943–960 (AKAAASAGEQPAAAQEAT). Residues 977–993 (ATRDGPSDSRDLSHARE) show a composition bias toward basic and acidic residues.

Belongs to the eIF-3 subunit A family. In terms of assembly, component of the eukaryotic translation initiation factor 3 (eIF-3) complex.

It localises to the cytoplasm. RNA-binding component of the eukaryotic translation initiation factor 3 (eIF-3) complex, which is involved in protein synthesis of a specialized repertoire of mRNAs and, together with other initiation factors, stimulates binding of mRNA and methionyl-tRNAi to the 40S ribosome. The eIF-3 complex specifically targets and initiates translation of a subset of mRNAs involved in cell proliferation. This is Eukaryotic translation initiation factor 3 subunit A from Coccidioides immitis (strain RS) (Valley fever fungus).